Here is a 365-residue protein sequence, read N- to C-terminus: Aspartate-semialdehyde dehydrogenase (365 aa).

NADP(+) is bound by residues threonine 13, glycine 14, serine 15, valine 16, serine 38, serine 41, leucine 85, and aspartate 86. A Phosphothreonine modification is found at threonine 13. Residue cysteine 156 is the Acyl-thioester intermediate of the active site. An NADP(+)-binding site is contributed by glycine 188. Histidine 256 acts as the Proton acceptor in catalysis. A phosphoserine mark is found at serine 318 and serine 323. Asparagine 343 contributes to the NADP(+) binding site.

Belongs to the aspartate-semialdehyde dehydrogenase family. Homotetramer.

It is found in the cytoplasm. The protein resides in the cytosol. It localises to the nucleus. It catalyses the reaction L-aspartate 4-semialdehyde + phosphate + NADP(+) = 4-phospho-L-aspartate + NADPH + H(+). Its pathway is amino-acid biosynthesis; L-methionine biosynthesis via de novo pathway; L-homoserine from L-aspartate: step 2/3. The protein operates within amino-acid biosynthesis; L-threonine biosynthesis; L-threonine from L-aspartate: step 2/5. Its function is as follows. Catalyzes the NADPH-dependent formation of L-aspartate 4-semialdehyde (L-ASA) by the reductive dephosphorylation of 4-phospho-L-aspartate. Mediates the second step in the biosynthesis of amino acids that derive from aspartate (the aspartate family of amino acids), including methioinine and threonine, the latter of which is a precursor to isoleucine. This is Aspartate-semialdehyde dehydrogenase (HOM2) from Saccharomyces cerevisiae (strain ATCC 204508 / S288c) (Baker's yeast).